We begin with the raw amino-acid sequence, 69 residues long: DNA-directed RNA polymerase subunit omega (69 aa).

Belongs to the RNA polymerase subunit omega family. The RNAP catalytic core consists of 2 alpha, 1 beta, 1 beta' and 1 omega subunit. When a sigma factor is associated with the core the holoenzyme is formed, which can initiate transcription.

It catalyses the reaction RNA(n) + a ribonucleoside 5'-triphosphate = RNA(n+1) + diphosphate. Promotes RNA polymerase assembly. Latches the N- and C-terminal regions of the beta' subunit thereby facilitating its interaction with the beta and alpha subunits. This is DNA-directed RNA polymerase subunit omega from Geotalea uraniireducens (strain Rf4) (Geobacter uraniireducens).